A 514-amino-acid chain; its full sequence is MQQLNPSEISALIKQRIGDLDTSATAKNEGTIVMVSDGIVRIHGLADAMYGEMIEFDGGLFGMALNLEQDSVGAVVLGNYLSLQEGQKARCTGRVLEVPVGPELLGRVVDALGNPIDGKGPIDAKLTDAVEKVAPGVIWRQSVDQPVQTGYKSVDTMIPVGRGQRELIIGDRQTGKTAMAIDAIIAQKNSGIKCVYVAIGQKQSTIANVVRKLEETGAMAYTTVVAAAAADPAAMQYLAPYSGCTMGEYFRDRGEDALIIYDDLSKQAVAYRQISLLLRRPPGREAYPGDVFYLHSRLLERASRVSAEYVEKFTNGAVTGKTGSLTALPIIETQAGDVSAFVPTNVISITDGQIFLETSLFNAGIRPAVNAGISVSRVGGSAQTKIIKKLSGGIRTALAQYRELAAFAQFASDLDEATRKQLEHGQRVTELMKQKQYAPYSIADQAVSVYASNEGYMADVEVKKIVDFDAALIAYFRSEYAPLMKQIDETGDYNKDIEAAIKAGIESFKATQTY.

170-177 (GDRQTGKT) is a binding site for ATP.

The protein belongs to the ATPase alpha/beta chains family. As to quaternary structure, F-type ATPases have 2 components, CF(1) - the catalytic core - and CF(0) - the membrane proton channel. CF(1) has five subunits: alpha(3), beta(3), gamma(1), delta(1), epsilon(1). CF(0) has three main subunits: a(1), b(2) and c(9-12). The alpha and beta chains form an alternating ring which encloses part of the gamma chain. CF(1) is attached to CF(0) by a central stalk formed by the gamma and epsilon chains, while a peripheral stalk is formed by the delta and b chains.

The protein resides in the cell inner membrane. The catalysed reaction is ATP + H2O + 4 H(+)(in) = ADP + phosphate + 5 H(+)(out). Produces ATP from ADP in the presence of a proton gradient across the membrane. The alpha chain is a regulatory subunit. The protein is ATP synthase subunit alpha of Acinetobacter baumannii (strain AB307-0294).